Reading from the N-terminus, the 418-residue chain is MEFDVKDLSLAEEGLKRIEWAEMDMPVLRQIRERFSKEKPLKGKKISACLHVTTETANLMRTLKEGGAEVYLTASNPLSTQDDVAAALVKYFEIPVFAIRGEDRETYYKHLRAVIEKEPDVVIDDGADLISTLHKEYPGLAEKVLGGMEETTTGVIRLRAMAEQGVLKFPIIAVNDAYTKHMFDNRYGTGQSTIDGILRATNRLLAGSYFVVAGYGWCGKGVAQRARGMGAIVIVTEVDPIKALEARMDGFLVMPMEEAAKLGDFFVTVTGNIHVIRREHFEVMKDGAIVANSGHFNVEIDIPALEEMAVEKREIRKEVTEYKLKDGRRIYLLAEGRLVNLAAAEGHPASVMDMSFSNQALSAEYIVKHHKELEKKVYRVPREIDEAVARLKLNALGIKIDELTEEQKKYLSSWEMGT.

3 residues coordinate substrate: threonine 53, aspartate 125, and glutamate 150. Position 151–153 (151–153 (TTT)) interacts with NAD(+). 2 residues coordinate substrate: lysine 180 and aspartate 184. Residues asparagine 185, 214–219 (GYGWCG), glutamate 237, asparagine 272, 293–295 (SGH), and asparagine 340 each bind NAD(+).

It belongs to the adenosylhomocysteinase family. Requires NAD(+) as cofactor.

The protein resides in the cytoplasm. The enzyme catalyses S-adenosyl-L-homocysteine + H2O = L-homocysteine + adenosine. Its pathway is amino-acid biosynthesis; L-homocysteine biosynthesis; L-homocysteine from S-adenosyl-L-homocysteine: step 1/1. Its function is as follows. May play a key role in the regulation of the intracellular concentration of adenosylhomocysteine. The chain is Adenosylhomocysteinase from Aquifex aeolicus (strain VF5).